We begin with the raw amino-acid sequence, 873 residues long: DNA mismatch repair protein MutS (873 aa).

Residue 628–635 (GPNMAGKS) coordinates ATP.

The protein belongs to the DNA mismatch repair MutS family.

Its function is as follows. This protein is involved in the repair of mismatches in DNA. It is possible that it carries out the mismatch recognition step. This protein has a weak ATPase activity. This Chlorobium chlorochromatii (strain CaD3) protein is DNA mismatch repair protein MutS.